The sequence spans 226 residues: Glutathione peroxidase 3 (226 aa).

An N-terminal signal peptide occupies residues 1-24 (MARILRASCLLSLLLAGFVPPGRG). Selenocysteine 73 is a catalytic residue. Residue selenocysteine 73 is a non-standard amino acid, selenocysteine.

It belongs to the glutathione peroxidase family. As to quaternary structure, homotetramer. As to expression, secreted in plasma.

It is found in the secreted. It carries out the reaction 2 glutathione + H2O2 = glutathione disulfide + 2 H2O. It catalyses the reaction tert-butyl hydroperoxide + 2 glutathione = tert-butanol + glutathione disulfide + H2O. Protects cells and enzymes from oxidative damage, by catalyzing the reduction of hydrogen peroxide, lipid peroxides and organic hydroperoxide, by glutathione. This Rattus norvegicus (Rat) protein is Glutathione peroxidase 3.